The chain runs to 479 residues: ATP-dependent RNA helicase DbpA (479 aa).

Residues 2–30 (SHFKNYQISHDILRALEGLGYTEPTKVQQ) carry the Q motif motif. In terms of domain architecture, Helicase ATP-binding spans 33 to 203 (IPAALERKDL…RQYMQNPEHI (171 aa)). 46–53 (SQTGSGKT) lines the ATP pocket. The short motif at 151–154 (DEAD) is the DEAD box element. The region spanning 214–374 (NIEHAVIQVR…KIEAPSQEEV (161 aa)) is the Helicase C-terminal domain. Positions 404 to 479 (MKLYFNGGKK…KQLKVNKANK (76 aa)) are involved in 23S rRNA binding.

It belongs to the DEAD box helicase family. DbpA subfamily. May interact with RNA helicases CshA and CshB.

It localises to the cytoplasm. The enzyme catalyses ATP + H2O = ADP + phosphate + H(+). ATPase activity is stimulated by interaction with RNA. Functionally, DEAD-box RNA helicase involved in the assembly of the 50S ribosomal subunit. Has an RNA-dependent ATPase activity, which is specific for 23S rRNA, and a 3' to 5' RNA helicase activity that uses the energy of ATP hydrolysis to destabilize and unwind short rRNA duplexes. In Bacillus subtilis (strain 168), this protein is ATP-dependent RNA helicase DbpA.